The sequence spans 323 residues: Penicillopepsin-1 (323 aa).

Ser3 carries an O-linked (Man...) serine glycan. An O-linked (Man...) threonine glycan is attached at Thr7. The Peptidase A1 domain maps to 17–320 (YITPVTIGGT…DSDGPQLGFA (304 aa)). Catalysis depends on residues Asp33 and Asp213. Residues Cys249 and Cys283 are joined by a disulfide bond.

The protein belongs to the peptidase A1 family. Monomer.

The protein resides in the secreted. It carries out the reaction Hydrolysis of proteins with broad specificity similar to that of pepsin A, preferring hydrophobic residues at P1 and P1', but also cleaving 20-Gly-|-Glu-21 in the B chain of insulin. Clots milk, and activates trypsinogen.. Functionally, secreted aspartic endopeptidase that allows assimilation of proteinaceous substrates. The scissile peptide bond is attacked by a nucleophilic water molecule activated by two aspartic residues in the active site. Shows a broad primary substrate specificity. Favors hydrophobic residues at the P1 and P1' positions, but can also activate trypsinogen and hydrolyze the B chain of insulin between positions 'Gly-20' and 'Glu-21'. The sequence is that of Penicillopepsin-1 from Penicillium janthinellum (Penicillium vitale).